The following is a 138-amino-acid chain: Putative pre-16S rRNA nuclease (138 aa).

Belongs to the YqgF nuclease family.

It localises to the cytoplasm. In terms of biological role, could be a nuclease involved in processing of the 5'-end of pre-16S rRNA. The chain is Putative pre-16S rRNA nuclease from Klebsiella pneumoniae subsp. pneumoniae (strain ATCC 700721 / MGH 78578).